A 124-amino-acid chain; its full sequence is Small ribosomal subunit protein uS12 (124 aa).

At D89 the chain carries 3-methylthioaspartic acid. Positions 104–124 are disordered; that stretch reads TQGVKNRGQARSRYGAKKEKK. Residues 111 to 124 show a composition bias toward basic residues; it reads GQARSRYGAKKEKK.

It belongs to the universal ribosomal protein uS12 family. Part of the 30S ribosomal subunit. Contacts proteins S8 and S17. May interact with IF1 in the 30S initiation complex.

Its function is as follows. With S4 and S5 plays an important role in translational accuracy. Interacts with and stabilizes bases of the 16S rRNA that are involved in tRNA selection in the A site and with the mRNA backbone. Located at the interface of the 30S and 50S subunits, it traverses the body of the 30S subunit contacting proteins on the other side and probably holding the rRNA structure together. The combined cluster of proteins S8, S12 and S17 appears to hold together the shoulder and platform of the 30S subunit. In Micrococcus luteus (strain ATCC 4698 / DSM 20030 / JCM 1464 / CCM 169 / CCUG 5858 / IAM 1056 / NBRC 3333 / NCIMB 9278 / NCTC 2665 / VKM Ac-2230) (Micrococcus lysodeikticus), this protein is Small ribosomal subunit protein uS12.